Consider the following 239-residue polypeptide: Phosphoadenosine 5'-phosphosulfate reductase (239 aa).

Cys-235 (nucleophile; cysteine thiosulfonate intermediate) is an active-site residue.

The protein belongs to the PAPS reductase family. CysH subfamily.

Its subcellular location is the cytoplasm. The catalysed reaction is [thioredoxin]-disulfide + sulfite + adenosine 3',5'-bisphosphate + 2 H(+) = [thioredoxin]-dithiol + 3'-phosphoadenylyl sulfate. Its pathway is sulfur metabolism; hydrogen sulfide biosynthesis; sulfite from sulfate: step 3/3. In terms of biological role, catalyzes the formation of sulfite from phosphoadenosine 5'-phosphosulfate (PAPS) using thioredoxin as an electron donor. The protein is Phosphoadenosine 5'-phosphosulfate reductase of Thiocapsa roseopersicina.